A 317-amino-acid polypeptide reads, in one-letter code: Melanocyte-stimulating hormone receptor (317 aa).

The Extracellular segment spans residues 1 to 37; that stretch reads MSVQGPQRRLLGSVNSTSPAAPRLGLAANQTGPRCLE. Asn-15 and Asn-29 each carry an N-linked (GlcNAc...) asparagine glycan. The helical transmembrane segment at 38–63 threads the bilayer; sequence VSVPDGLFLSLGLVSVVENVLVVAAI. At 64–72 the chain is on the cytoplasmic side; it reads AKNRNLHSP. A helical membrane pass occupies residues 73-93; sequence MYYFICCLAVSDLLVSVSSVL. Topologically, residues 94-118 are extracellular; the sequence is ETAVMLLLEAGTLAGRAAVVQQLDD. A helical membrane pass occupies residues 119–140; it reads IIDVLVCGAMVSSLCFLGAIAV. Residues 141-163 lie on the Cytoplasmic side of the membrane; that stretch reads DRYISIFYALRYHSIVTLPRAWR. The chain crosses the membrane as a helical span at residues 164 to 183; sequence AISAIWVASVLSSTLFIAYY. The Extracellular portion of the chain corresponds to 184–191; the sequence is DHTAVLLC. A helical membrane pass occupies residues 192-211; sequence LVSFFVAMLVLMAVLYVHML. The Cytoplasmic portion of the chain corresponds to 212 to 240; sequence ARACQHARGIARLHKRQRPVHQGLGLKGA. A helical transmembrane segment spans residues 241-266; it reads ATLTILLGIFFLCWGPFFLHLSLMVL. Residues 267–279 are Extracellular-facing; that stretch reads CPRHPICGCVFKN. The helical transmembrane segment at 280 to 300 threads the bilayer; it reads FNLFLTLIICNSIVDPLIYAF. Over 301–317 the chain is Cytoplasmic; it reads RSQELRKTLREVLLCSW. Cys-315 is lipidated: S-palmitoyl cysteine.

The protein belongs to the G-protein coupled receptor 1 family. Interacts with MGRN1, but does not undergo MGRN1-mediated ubiquitination; this interaction competes with GNAS-binding and thus inhibits agonist-induced cAMP production. Interacts with OPN3; the interaction results in a decrease in MC1R-mediated cAMP signaling and ultimately a decrease in melanin production in melanocytes.

It is found in the cell membrane. In terms of biological role, receptor for MSH (alpha, beta and gamma) and ACTH. The activity of this receptor is mediated by G proteins which activate adenylate cyclase. Mediates melanogenesis, the production of eumelanin (black/brown) and phaeomelanin (red/yellow), via regulation of cAMP signaling in melanocytes. The sequence is that of Melanocyte-stimulating hormone receptor (MC1R) from Puma yagouaroundi (Jaguarundi).